Here is a 162-residue protein sequence, read N- to C-terminus: Protein-export protein SecB (162 aa).

This sequence belongs to the SecB family. As to quaternary structure, homotetramer, a dimer of dimers. One homotetramer interacts with 1 SecA dimer.

Its subcellular location is the cytoplasm. Its function is as follows. One of the proteins required for the normal export of preproteins out of the cell cytoplasm. It is a molecular chaperone that binds to a subset of precursor proteins, maintaining them in a translocation-competent state. It also specifically binds to its receptor SecA. The sequence is that of Protein-export protein SecB from Hamiltonella defensa subsp. Acyrthosiphon pisum (strain 5AT).